The following is a 349-amino-acid chain: Magnesium-protoporphyrin IX monomethyl ester [oxidative] cyclase (349 aa).

The span at 1 to 10 shows a compositional bias: low complexity; that stretch reads MTATTATAPT. Residues 1–23 form a disordered region; it reads MTATTATAPTMRGGGRNELPPHL.

It belongs to the AcsF family. Requires Fe cation as cofactor.

The enzyme catalyses Mg-protoporphyrin IX 13-monomethyl ester + 3 NADPH + 3 O2 + 2 H(+) = 3,8-divinyl protochlorophyllide a + 3 NADP(+) + 5 H2O. It participates in porphyrin-containing compound metabolism; chlorophyll biosynthesis (light-independent). In terms of biological role, catalyzes the formation of the isocyclic ring in chlorophyll biosynthesis. Mediates the cyclase reaction, which results in the formation of divinylprotochlorophyllide (Pchlide) characteristic of all chlorophylls from magnesium-protoporphyrin IX 13-monomethyl ester (MgPMME). This Prochlorococcus marinus (strain MIT 9313) protein is Magnesium-protoporphyrin IX monomethyl ester [oxidative] cyclase.